The chain runs to 156 residues: Small ribosomal subunit protein uS7c (156 aa).

The protein belongs to the universal ribosomal protein uS7 family. Part of the 30S ribosomal subunit.

It is found in the plastid. It localises to the chloroplast. Functionally, one of the primary rRNA binding proteins, it binds directly to 16S rRNA where it nucleates assembly of the head domain of the 30S subunit. This is Small ribosomal subunit protein uS7c (rps7) from Chara vulgaris (Common stonewort).